A 320-amino-acid polypeptide reads, in one-letter code: Ino eighty subunit 2 (320 aa).

2 stretches are compositionally biased toward acidic residues: residues 1–12 and 22–35; these read MDSEASDIEAEL and EYID…DIDD. Disordered regions lie at residues 1–232 and 244–306; these read MDSE…SKKK and ENAR…EGMT. Positions 42–59 are enriched in basic residues; it reads SSRRTARRSVPKGVRTSK. Ser-67 carries the post-translational modification Phosphoserine. Positions 68 to 80 are enriched in acidic residues; that stretch reads VEVDEDYDEEEDV. Positions 105–116 are enriched in basic and acidic residues; that stretch reads EKSDIGDSKGND. A compositionally biased stretch (acidic residues) spans 117–130; that stretch reads GEIEDGILEEEESL. A Phosphoserine modification is found at Ser-129. Positions 131-147 are enriched in basic and acidic residues; sequence EKELNRGGGKEVEKSEE. Residues 161–174 are compositionally biased toward acidic residues; the sequence is EEQDGESGGYEDNE. The segment covering 207-217 has biased composition (low complexity); it reads TDSTRSTTTRS. Residues 244 to 264 show a composition bias toward basic and acidic residues; it reads ENARKRKNLSEKRLEEEKQDT. Positions 268-278 are enriched in basic residues; sequence LLKKRAGKSRS.

It belongs to the IES2 family. As to quaternary structure, component of the chromatin-remodeling INO80 complex, at least composed of ARP4, ARP5, ARP8, RVB1, RVB2, TAF14, NHP10, IES1, IES3, IES4, IES6, ACT1, IES2, IES5 and INO80.

Its subcellular location is the nucleus. In terms of biological role, component of the INO80 complex which remodels chromatin by shifting nucleosomes and is involved in DNA repair. This chain is Ino eighty subunit 2 (IES2), found in Saccharomyces cerevisiae (strain ATCC 204508 / S288c) (Baker's yeast).